A 204-amino-acid polypeptide reads, in one-letter code: ATP phosphoribosyltransferase (204 aa).

The protein belongs to the ATP phosphoribosyltransferase family. Short subfamily.

It is found in the cytoplasm. The enzyme catalyses 1-(5-phospho-beta-D-ribosyl)-ATP + diphosphate = 5-phospho-alpha-D-ribose 1-diphosphate + ATP. It functions in the pathway amino-acid biosynthesis; L-histidine biosynthesis; L-histidine from 5-phospho-alpha-D-ribose 1-diphosphate: step 1/9. Functionally, catalyzes the condensation of ATP and 5-phosphoribose 1-diphosphate to form N'-(5'-phosphoribosyl)-ATP (PR-ATP). Has a crucial role in the pathway because the rate of histidine biosynthesis seems to be controlled primarily by regulation of HisG enzymatic activity. In Pyrococcus furiosus (strain ATCC 43587 / DSM 3638 / JCM 8422 / Vc1), this protein is ATP phosphoribosyltransferase (hisG).